The sequence spans 391 residues: Nucleosome assembly protein 1-like 1 (391 aa).

Residues 1 to 10 (MADIDNKEQS) are compositionally biased toward basic and acidic residues. The disordered stretch occupies residues 1–32 (MADIDNKEQSELDQDLDDVEEVEEEETGEETK). Position 2 is an N-acetylalanine (alanine 2). Serine 10 carries the post-translational modification Phosphoserine. Acidic residues predominate over residues 11–28 (ELDQDLDDVEEVEEEETG). Residues threonine 62 and threonine 64 each carry the phosphothreonine modification. The residue at position 69 (serine 69) is a Phosphoserine. An N6-acetyllysine modification is found at lysine 116. Residues 125–150 (YEPTEEECEWKPDEEDEISEELKEKA) carry the NAP1L motif motif. Residues 132 to 143 (CEWKPDEEDEIS) are compositionally biased toward acidic residues. The disordered stretch occupies residues 132–163 (CEWKPDEEDEISEELKEKAKVEDEKKDEEKED). The residue at position 143 (serine 143) is a Phosphoserine. Positions 144-163 (EELKEKAKVEDEKKDEEKED) are enriched in basic and acidic residues. Positions 273–279 (IKKKQKH) match the Nuclear localization signal motif. The segment at 345–391 (EAIEDDDDDYDEEGEEADEEGEEEGDEENDPDYDPKKDQNPAECKQQ) is disordered. The span at 346-376 (AIEDDDDDYDEEGEEADEEGEEEGDEENDPD) shows a compositional bias: acidic residues. 2 positions are modified to 5-glutamyl polyglycine: glutamate 359 and glutamate 360. Basic and acidic residues predominate over residues 377–391 (YDPKKDQNPAECKQQ). Cysteine 388 is subject to Cysteine methyl ester. Cysteine 388 carries S-farnesyl cysteine lipidation. A propeptide spans 389-391 (KQQ) (removed in mature form).

This sequence belongs to the nucleosome assembly protein (NAP) family. In terms of assembly, homodimer. The dimer binds strongly and sequentially to single and double H2A-H2B heterodimers. Interacts with ERCC6; this interaction increases ERCC6 processivity. Interacts with RAD54. Interacts with SETD1A. In terms of processing, polyglycylated by TTLL10 on glutamate residues, resulting in polyglycine chains on the gamma-carboxyl group. Both polyglutamylation and polyglycylation modifications can coexist on the same protein on adjacent residues, and lowering polyglycylation levels increases polyglutamylation, and reciprocally. Polyglutamylated by TTLL4 on glutamate residues, resulting in polyglutamate chains on the gamma-carboxyl group. Both polyglutamylation and polyglycylation modifications can coexist on the same protein on adjacent residues, and lowering polyglycylation levels increases polyglutamylation, and reciprocally.

It is found in the nucleus. Its subcellular location is the melanosome. The protein resides in the cytoplasm. Functionally, histone chaperone that plays a role in the nuclear import of H2A-H2B and nucleosome assembly. Also participates in several important DNA repair mechanisms: greatly enhances ERCC6-mediated chromatin remodeling which is essential for transcription-coupled nucleotide excision DNA repair. Also stimulates homologous recombination (HR) by RAD51 and RAD54 which is essential in mitotic DNA double strand break (DSB) repair. Plays a key role in the regulation of embryonic neurogenesis. Promotes the proliferation of neural progenitors and inhibits neuronal differentiation during cortical development. Regulates neurogenesis via the modulation of RASSF10; regulates RASSF10 expression by promoting SETD1A-mediated H3K4 methylation at the RASSF10 promoter. This is Nucleosome assembly protein 1-like 1 (NAP1L1) from Bos taurus (Bovine).